The following is a 631-amino-acid chain: Phosphomethylpyrimidine synthase (631 aa).

Residues N239, M268, Y297, H333, 353-355, 394-397, and E433 each bind substrate; these read SRG and DGLR. Residue H437 participates in Zn(2+) binding. Y460 contributes to the substrate binding site. H501 serves as a coordination point for Zn(2+). Residues C581, C584, and C589 each coordinate [4Fe-4S] cluster.

Belongs to the ThiC family. In terms of assembly, homodimer. The cofactor is [4Fe-4S] cluster.

It catalyses the reaction 5-amino-1-(5-phospho-beta-D-ribosyl)imidazole + S-adenosyl-L-methionine = 4-amino-2-methyl-5-(phosphooxymethyl)pyrimidine + CO + 5'-deoxyadenosine + formate + L-methionine + 3 H(+). Its pathway is cofactor biosynthesis; thiamine diphosphate biosynthesis. Its function is as follows. Catalyzes the synthesis of the hydroxymethylpyrimidine phosphate (HMP-P) moiety of thiamine from aminoimidazole ribotide (AIR) in a radical S-adenosyl-L-methionine (SAM)-dependent reaction. This chain is Phosphomethylpyrimidine synthase, found in Escherichia coli O6:K15:H31 (strain 536 / UPEC).